Here is a 100-residue protein sequence, read N- to C-terminus: Integration host factor subunit alpha (100 aa).

Belongs to the bacterial histone-like protein family. Heterodimer of an alpha and a beta chain.

This protein is one of the two subunits of integration host factor, a specific DNA-binding protein that functions in genetic recombination as well as in transcriptional and translational control. The polypeptide is Integration host factor subunit alpha (Ectopseudomonas mendocina (strain ymp) (Pseudomonas mendocina)).